Reading from the N-terminus, the 352-residue chain is C5a anaphylatoxin chemotactic receptor 1 (352 aa).

The segment covering 1 to 11 (MDPISNDSSEI) has biased composition (polar residues). Residues 1 to 20 (MDPISNDSSEITYDYSDGTP) form a disordered region. At 1–38 (MDPISNDSSEITYDYSDGTPNPDMPADGVYIPKMEPGD) the chain is on the extracellular side. N6 carries N-linked (GlcNAc...) asparagine glycosylation. 2 positions are modified to sulfotyrosine: Y13 and Y15. A helical transmembrane segment spans residues 39–65 (IAALIIYLAVFLVGVTGNALVVWVTAF). Residues 66–70 (EAKRT) are Cytoplasmic-facing. A helical transmembrane segment spans residues 71–94 (VNAIWFLNLAVADLLSCLALPILF). At 95–111 (TSIVKHNHWPFGDQACI) the chain is on the extracellular side. A disulfide bond links C110 and C189. Residues 112-133 (VLPSLILLNMYSSILLLATISA) traverse the membrane as a helical segment. The Cytoplasmic segment spans residues 134–154 (DRFLLVFKPIWCQKFRRPGLA). The helical transmembrane segment at 155-175 (WMACGVTWVLALLLTIPSFVF) threads the bilayer. The Extracellular segment spans residues 176 to 202 (RRIHKDPYSDSILCNIDYSKGPFFIEK). The helical transmembrane segment at 203-228 (AIAILRLMVGFVLPLLTLNICYTFLL) threads the bilayer. Over 229–244 (IRTWSRKATRSTKTLK) the chain is Cytoplasmic. Residues 245–267 (VVMAVVTCFFVFWLPYQVTGVIL) form a helical membrane-spanning segment. The Extracellular portion of the chain corresponds to 268 to 284 (AWLPRSSSTFQSVERLN). A helical membrane pass occupies residues 285 to 305 (SLCVSLAYINCCVNPIIYVMA). Residues 306–352 (GQGFHGRLRRSLPSIIRNVLSEDSLGRDSKSFTRSTMDTSTQKSQAV) are Cytoplasmic-facing. Residues S316, S319, S326, S329, S334, S336, and S340 each carry the phosphoserine modification. Positions 332–352 (RDSKSFTRSTMDTSTQKSQAV) are disordered. Residues 337-352 (FTRSTMDTSTQKSQAV) show a composition bias toward polar residues.

Belongs to the G-protein coupled receptor 1 family. As to quaternary structure, homodimer. May also form higher-order oligomers. Interacts (when phosphorylated) with ARRB1 and ARRB2; the interaction is associated with internalization of C5aR. In terms of processing, sulfation plays a critical role in the association of C5aR with C5a, but no significant role in the ability of the receptor to transduce a signal and mobilize calcium in response to a small peptide agonist. Phosphorylated on serine residues in response to C5a binding, resulting in internalization of the receptor and short-term desensitization to the ligand.

It localises to the cell membrane. The protein localises to the cytoplasmic vesicle. Its function is as follows. Receptor for the chemotactic and inflammatory peptide anaphylatoxin C5a. The ligand interacts with at least two sites on the receptor: a high-affinity site on the extracellular N-terminus, and a second site in the transmembrane region which activates downstream signaling events. Receptor activation stimulates chemotaxis, granule enzyme release, intracellular calcium release and superoxide anion production. This is C5a anaphylatoxin chemotactic receptor 1 (C5ar1) from Rattus norvegicus (Rat).